Here is a 619-residue protein sequence, read N- to C-terminus: DEAD-box ATP-dependent RNA helicase 35B (619 aa).

Low complexity-rich tracts occupy residues 1–10 (MAAAAAAAAA) and 49–58 (PPTTNAVAVA). The segment at 1-72 (MAAAAAAAAA…PPRSTSSPAV (72 aa)) is disordered. Positions 173–201 (RSFGDLRLPEPILRALRGKGIEKPTPIQV) match the Q motif motif. The region spanning 204 to 388 (LPVALSGRDM…KSALVKPIIV (185 aa)) is the Helicase ATP-binding domain. ATP is bound at residue 217-224 (AFTGSGKT). The short motif at 336–339 (DEAD) is the DEAD box element. Positions 399-559 (DVIQEVEYVK…RLPPILADLD (161 aa)) constitute a Helicase C-terminal domain. The CCHC-type zinc-finger motif lies at 576–593 (KGCAFCGGLGHRIEACPK).

The protein belongs to the DEAD box helicase family. DDX41 subfamily.

The enzyme catalyses ATP + H2O = ADP + phosphate + H(+). This Oryza sativa subsp. japonica (Rice) protein is DEAD-box ATP-dependent RNA helicase 35B.